We begin with the raw amino-acid sequence, 457 residues long: MYSFNTLRFYLWETIVFFSLAASKEAEAARSAPKPMSPSDFLDKLMGRTSGYDARIRPNFKGPPVNVSCNIFINSFGSIAETTMDYRVNIFLRQQWNDPRLAYNEYPDDSLDLDPSMLDSIWKPDLFFANEKGAHFHEITTDNKLLRISRNGNVLYSIRITLTLACPMDLKNFPMDVQTCIMQLESFGYTMNDLIFEWQEQGAVQVADGLTLPQFILKEEKDLRYCTKHYNTGKFTCIEARFHLERQMGYYLIQMYIPSLLIVILSWISFWINMDAAPARVGLGITTVLTMTTQSSGSRASLPKVSYVKAIDIWMAVCLLFVFSALLEYAAVNFVSRQHKELLRFRRKRRHHKSPMLNLFQDDEGGEGRFNFSAYGMGPACLQAKDGISVKGANNNNTTNPPPAPSKSPEEMRKLFIQRAKKIDKISRIGFPMAFLIFNMFYWIIYKIVRREDVHNK.

The N-terminal stretch at 1-28 (MYSFNTLRFYLWETIVFFSLAASKEAEA) is a signal peptide. At 29–250 (ARSAPKPMSP…RFHLERQMGY (222 aa)) the chain is on the extracellular side. N-linked (GlcNAc...) asparagine glycosylation is present at Asn66. Glycine contacts are provided by Arg93 and Ser157. Residues Cys166 and Cys180 are joined by a disulfide bond. 2 residues coordinate Zn(2+): Glu220 and Asp222. The cysteines at positions 226 and 237 are disulfide-linked. 230 to 235 (YNTGKF) provides a ligand contact to strychnine. Thr232 lines the glycine pocket. His243 is a Zn(2+) binding site. The chain crosses the membrane as a helical span at residues 251–272 (YLIQMYIPSLLIVILSWISFWI). The Cytoplasmic portion of the chain corresponds to 273–277 (NMDAA). The chain crosses the membrane as a helical span at residues 278-298 (PARVGLGITTVLTMTTQSSGS). The Extracellular segment spans residues 299–309 (RASLPKVSYVK). A helical transmembrane segment spans residues 310–330 (AIDIWMAVCLLFVFSALLEYA). At 331 to 425 (AVNFVSRQHK…FIQRAKKIDK (95 aa)) the chain is on the cytoplasmic side. Residues 391-410 (KGANNNNTTNPPPAPSKSPE) form a disordered region. A helical membrane pass occupies residues 426-446 (ISRIGFPMAFLIFNMFYWIIY). Over 447-457 (KIVRREDVHNK) the chain is Extracellular.

Belongs to the ligand-gated ion channel (TC 1.A.9) family. Glycine receptor (TC 1.A.9.3) subfamily. GLRA1 sub-subfamily. Interacts with GLRB to form heteropentameric channels; this is probably the predominant form in vivo. Heteropentamer composed of four GLRA1 subunits and one GLRB subunit. Heteropentamer composed of two GLRA1 and three GLRB. Heteropentamer composed of three GLRA1 and two GLRB. Homopentamer (in vitro). Both homopentamers and heteropentamers form functional ion channels, but their characteristics are subtly different. Detected in spinal cord neurons. Detected in brain stem neurons. Detected at lower levels in hippocampus and cerebellum. Detected in the inner plexiform layer of the retina (at protein level).

It is found in the postsynaptic cell membrane. Its subcellular location is the synapse. The protein resides in the perikaryon. It localises to the cell projection. The protein localises to the dendrite. It is found in the cell membrane. The enzyme catalyses chloride(in) = chloride(out). Its activity is regulated as follows. Channel opening is triggered by extracellular glycine. Channel characteristics depend on the subunit composition; heteropentameric channels are activated by lower glycine levels and display faster desensitization. Channel opening is also triggered by taurine and beta-alanine. Inhibited by strychnine. Strychnine binding locks the channel in a closed conformation and prevents channel opening in response to extracellular glycine. Inhibited by picrotoxin. Channel activity is enhanced by 5 uM Zn(2+) and inhibited by 100 uM Zn(2+). In terms of biological role, subunit of heteromeric glycine-gated chloride channels. Plays an important role in the down-regulation of neuronal excitability. Contributes to the generation of inhibitory postsynaptic currents. Channel activity is potentiated by ethanol. Potentiation of channel activity by intoxicating levels of ethanol contribute to the sedative effects of ethanol. The sequence is that of Glycine receptor subunit alpha-1 (Glra1) from Mus musculus (Mouse).